Consider the following 143-residue polypeptide: Submaxillary gland androgen-regulated protein 2, isoform delta (143 aa).

An N-terminal signal peptide occupies residues 1 to 22; that stretch reads MKPLCLVFGLCVLIGCFLSSEC. 2 disordered regions span residues 28 to 52 and 116 to 143; these read GQHD…PDPN and VPRK…TDSF. Composition is skewed to polar residues over residues 36-45 and 122-143; these read LSPSNPSSHF and NATP…TDSF.

The protein localises to the secreted. Functionally, may play a role in protection or detoxification. This chain is Submaxillary gland androgen-regulated protein 2, isoform delta (Smr2), found in Mus musculus (Mouse).